The following is a 139-amino-acid chain: Putative nickel-responsive regulator (139 aa).

Positions 79, 90, 92, and 98 each coordinate Ni(2+).

The protein belongs to the transcriptional regulatory CopG/NikR family. It depends on Ni(2+) as a cofactor.

In terms of biological role, transcriptional regulator. This is Putative nickel-responsive regulator from Solidesulfovibrio magneticus (strain ATCC 700980 / DSM 13731 / RS-1) (Desulfovibrio magneticus).